We begin with the raw amino-acid sequence, 299 residues long: Prohibitin-2 (299 aa).

A2 carries the N-acetylalanine modification. The tract at residues 19–49 (MGTALKLLLGAGAVAYGVRESVFTVEGGHRA) is necessary for transcriptional repression. Phosphotyrosine is present on Y128. K147 is subject to N6-acetyllysine. Positions 150–174 (ASQLITQRAQVSLLIRRELTERAKD) are necessary for transcriptional repression. Position 151 is a phosphoserine (S151). A coiled-coil region spans residues 190-238 (SREYTAAVEAKQVAQQEAQRAQFLVEKAKQEQRQKIVQAEGEAEAAKML). 4 positions are modified to N6-acetyllysine: K200, K236, K250, and K262.

It belongs to the prohibitin family. The mitochondrial prohibitin complex consists of two subunits (PHB1 and PHB2), assembled into a membrane-associated ring-shaped supercomplex of approximately 1 mDa. Interacts with ESR1, HDAC1 and HDAC5. Interacts with ZNF703. Interacts with STOML2. Interacts with ARFGEF3. Interacts with SPHK2. Interacts with COX4I1; the interaction associates PHB2 with COX. Interacts with MAP1LC3B (membrane-bound form LC3-II); the interaction is direct and upon mitochondrial depolarization and proteasome-dependent outer membrane rupture. Interacts with IGFBP6 (via C-terminal domain). Interacts with CLPB. Interacts with CD86 (via cytoplasmic domain); the interactions increases after priming with CD40. Interacts with AFG3L2. Interacts with DNAJC19. Interacts with AKT2; this interaction may be important for myogenic differentiation. In terms of processing, phosphorylated. Tyrosine phosphorylation is indirectly stimulated by IGFBP6. As to expression, widely expressed in different tissues.

It is found in the mitochondrion inner membrane. It localises to the cytoplasm. Its subcellular location is the nucleus. The protein localises to the cell membrane. Its function is as follows. Protein with pleiotropic attributes mediated in a cell-compartment- and tissue-specific manner, which include the plasma membrane-associated cell signaling functions, mitochondrial chaperone, and transcriptional co-regulator of transcription factors and sex steroid hormones in the nucleus. In terms of biological role, in the mitochondria, together with PHB, forms large ring complexes (prohibitin complexes) in the inner mitochondrial membrane (IMM) and functions as a chaperone protein that stabilizes mitochondrial respiratory enzymes and maintains mitochondrial integrity in the IMM, which is required for mitochondrial morphogenesis, neuronal survival, and normal lifespan. The prohibitin complex, with DNAJC19, regulates cardiolipin remodeling and the protein turnover of OMA1 in a cardiolipin-binding manner. Also regulates cytochrome-c oxidase assembly (COX) and mitochondrial respiration. Binding to sphingoid 1-phosphate (SPP) modulates its regulator activity. Has a key role of mitophagy receptor involved in targeting mitochondria for autophagic degradation. Involved in mitochondrial-mediated antiviral innate immunity, activates RIG-I-mediated signal transduction and production of IFNB1 and pro-inflammatory cytokine IL6. Functionally, in the nucleus, serves as transcriptional co-regulator. Acts as a mediator of transcriptional repression by nuclear hormone receptors via recruitment of histone deacetylases. Functions as an estrogen receptor (ER)-selective coregulator that potentiates the inhibitory activities of antiestrogens and represses the activity of estrogens. Competes with NCOA1 for modulation of ER transcriptional activity. In the plasma membrane, is involved in IGFBP6-induced cell migration. Cooperates with CD86 to mediate CD86-signaling in B lymphocytes that regulates the level of IgG1 produced through the activation of distal signaling intermediates. Upon CD40 engagement, required to activate NF-kappa-B signaling pathway via phospholipase C and protein kinase C activation. The sequence is that of Prohibitin-2 from Mus musculus (Mouse).